Consider the following 227-residue polypeptide: Phosphoglycolate phosphatase (227 aa).

Aspartate 11 functions as the Nucleophile in the catalytic mechanism. Positions 11, 13, and 176 each coordinate Mg(2+).

It belongs to the HAD-like hydrolase superfamily. CbbY/CbbZ/Gph/YieH family. The cofactor is Mg(2+).

It catalyses the reaction 2-phosphoglycolate + H2O = glycolate + phosphate. Its pathway is organic acid metabolism; glycolate biosynthesis; glycolate from 2-phosphoglycolate: step 1/1. In terms of biological role, specifically catalyzes the dephosphorylation of 2-phosphoglycolate. Is involved in the dissimilation of the intracellular 2-phosphoglycolate formed during the DNA repair of 3'-phosphoglycolate ends, a major class of DNA lesions induced by oxidative stress. The polypeptide is Phosphoglycolate phosphatase (Aliivibrio fischeri (strain ATCC 700601 / ES114) (Vibrio fischeri)).